We begin with the raw amino-acid sequence, 208 residues long: Ribosomal RNA small subunit methyltransferase G (208 aa).

S-adenosyl-L-methionine-binding positions include glycine 78, phenylalanine 83, 101 to 103, 129 to 130, and arginine 142; these read ERS and IE.

It belongs to the methyltransferase superfamily. RNA methyltransferase RsmG family.

It is found in the cytoplasm. Functionally, specifically methylates the N7 position of a guanine in 16S rRNA. The polypeptide is Ribosomal RNA small subunit methyltransferase G (Borreliella burgdorferi (strain ATCC 35210 / DSM 4680 / CIP 102532 / B31) (Borrelia burgdorferi)).